Here is a 148-residue protein sequence, read N- to C-terminus: UPF0540 protein At1g62000 (148 aa).

Positions 1-21 (MNATKFVVLLVIGILCAIVTA) are cleaved as a signal peptide. The segment covering 123–132 (RANGKVASAS) has biased composition (low complexity). Residues 123–148 (RANGKVASASRVKGSSEKKKGKGKKD) form a disordered region.

Belongs to the UPF0540 family.

This is UPF0540 protein At1g62000 from Arabidopsis thaliana (Mouse-ear cress).